We begin with the raw amino-acid sequence, 291 residues long: Light-independent protochlorophyllide reductase iron-sulfur ATP-binding protein (291 aa).

Residues 10 to 15 (GIGKST) and Lys39 each bind ATP. Ser14 contacts Mg(2+). 2 residues coordinate [4Fe-4S] cluster: Cys95 and Cys129. An ATP-binding site is contributed by 180 to 181 (NR).

The protein belongs to the NifH/BchL/ChlL family. As to quaternary structure, homodimer. Protochlorophyllide reductase is composed of three subunits; ChlL, ChlN and ChlB. Requires [4Fe-4S] cluster as cofactor.

It is found in the plastid. The protein localises to the chloroplast. It carries out the reaction chlorophyllide a + oxidized 2[4Fe-4S]-[ferredoxin] + 2 ADP + 2 phosphate = protochlorophyllide a + reduced 2[4Fe-4S]-[ferredoxin] + 2 ATP + 2 H2O. The protein operates within porphyrin-containing compound metabolism; chlorophyll biosynthesis (light-independent). Functionally, component of the dark-operative protochlorophyllide reductase (DPOR) that uses Mg-ATP and reduced ferredoxin to reduce ring D of protochlorophyllide (Pchlide) to form chlorophyllide a (Chlide). This reaction is light-independent. The L component serves as a unique electron donor to the NB-component of the complex, and binds Mg-ATP. In Picea abies (Norway spruce), this protein is Light-independent protochlorophyllide reductase iron-sulfur ATP-binding protein.